A 139-amino-acid polypeptide reads, in one-letter code: Early placenta insulin-like peptide (139 aa).

The first 25 residues, 1-25 (MASLFRSYLPAIWLLLSQLLRESLA), serve as a signal peptide directing secretion. 3 cysteine pairs are disulfide-bonded: cysteine 31-cysteine 125, cysteine 43-cysteine 138, and cysteine 124-cysteine 129. Residues 59 to 114 (LESGRPKEMVSTSNNKDGQALGTTSEFIPNLSPELKKPLSEGQPSLKKIILSRKKR) constitute a propeptide, c peptide.

It belongs to the insulin family. As to expression, expressed in placenta, uterus and in fetal perichondrium. Expression levels were increased in both early placentas and molar pregnancies and were reduced in choriocarcinoma cells.

The protein resides in the secreted. In terms of biological role, may play an important role in trophoblast development and in the regulation of bone formation. This is Early placenta insulin-like peptide (INSL4) from Homo sapiens (Human).